The sequence spans 2033 residues: Major viral transcription factor ICP4 homolog (2033 aa).

Low complexity predominate over residues 1-16; the sequence is MFWHQPRQQQLRQLQR. Disordered stretches follow at residues 1–47, 95–145, 157–199, 218–240, 277–301, 313–338, 350–461, 505–527, 719–747, 1015–1064, 1085–1186, 1294–1342, 1420–1451, 1531–1612, 1636–1655, 1664–1718, and 1746–2033; these read MFWH…PPSP, FSDP…LPAP, LSSS…GSSY, PPRSVPDCRRGEPVSEDGMADRC, DQSPRGLGAEPHVAEAGRPSSCVGE, EERKEAARRSPDAERNDDEEEYESLP, AEIN…GAVA, SFAQRQQPRQQQHAPRNKPARQR, LPPDGGDDRDGGGKSRGGRGGGSKDASRT, GKQS…GALN, LLSD…PGDP, ETWR…EGGT, ASPHRGVGGKHRDKRPCLAEGTPSAPSCRDAA, VVFP…PPAA, RFDEADGEDPLPPAACGGKP, LCEQ…SPSP, and EISP…GTER. Residues 157–173 show a composition bias toward low complexity; that stretch reads LSSSSPSGSSRGSVTSP. Basic and acidic residues predominate over residues 223–240; it reads PDCRRGEPVSEDGMADRC. Basic and acidic residues predominate over residues 313-326; sequence EERKEAARRSPDAE. Over residues 359–368 the composition is skewed to acidic residues; that stretch reads ESDEAEDEDA. Positions 507-518 are enriched in low complexity; it reads AQRQQPRQQQHA. Over residues 732-741 the composition is skewed to gly residues; that stretch reads KSRGGRGGGS. Residues 1031–1056 are compositionally biased toward low complexity; that stretch reads RATASSPRTPASRPPHGSAAAPPSGR. Positions 1086–1097 are enriched in acidic residues; the sequence is LSDEAGTDDDGD. The segment covering 1169–1181 has biased composition (low complexity); sequence SSSSFASSSLASA. Over residues 1294–1303 the composition is skewed to basic and acidic residues; it reads ETWRDAEDHP. The span at 1575 to 1591 shows a compositional bias: basic and acidic residues; it reads SHDRSPSSSSRRRDGRP. Residues 1592 to 1602 show a composition bias toward basic residues; the sequence is SSRRRPSRRMS. Composition is skewed to basic and acidic residues over residues 1752 to 1765 and 1774 to 1795; these read RRRDAEGRRFGCRQ and EGGRESPERVLGRRQSRRDSVP. Residues 1812–1843 show a composition bias toward low complexity; it reads SAGRSSSSSSSSSSSSSSSPSSRPSRSATPSL. The segment covering 1853–1869 has biased composition (basic and acidic residues); sequence APVDRSRSGRRRERDRP. Over residues 1912–1921 the composition is skewed to polar residues; the sequence is TPSSATTLPS. The span at 1927–1936 shows a compositional bias: acidic residues; sequence DSVDETETED. Residues 1937–1948 show a composition bias toward low complexity; it reads SAPPARLAPSPL.

This sequence belongs to the herpesviridae ICP4 family. Post-translationally, a long stretch of serine residues may be a major site of phosphorylation.

Its subcellular location is the host nucleus. Its function is as follows. This IE protein is a multifunctional protein capable of migrating to the nucleus, binding to DNA, trans-activating other viral genes, and autoregulating its own synthesis. It is required for the switch from immediate-early to early mode of gene expression. This Amazona oratrix (yellow-headed parrot) protein is Major viral transcription factor ICP4 homolog (ICP4B).